Consider the following 471-residue polypeptide: Methylenetetrahydrofolate--tRNA-(uracil-5-)-methyltransferase TrmFO (471 aa).

Residue 9–14 participates in FAD binding; it reads GGGLSG.

Belongs to the MnmG family. TrmFO subfamily. The cofactor is FAD.

Its subcellular location is the cytoplasm. It catalyses the reaction uridine(54) in tRNA + (6R)-5,10-methylene-5,6,7,8-tetrahydrofolate + NADH + H(+) = 5-methyluridine(54) in tRNA + (6S)-5,6,7,8-tetrahydrofolate + NAD(+). The catalysed reaction is uridine(54) in tRNA + (6R)-5,10-methylene-5,6,7,8-tetrahydrofolate + NADPH + H(+) = 5-methyluridine(54) in tRNA + (6S)-5,6,7,8-tetrahydrofolate + NADP(+). Its function is as follows. Catalyzes the folate-dependent formation of 5-methyl-uridine at position 54 (M-5-U54) in all tRNAs. In Beijerinckia indica subsp. indica (strain ATCC 9039 / DSM 1715 / NCIMB 8712), this protein is Methylenetetrahydrofolate--tRNA-(uracil-5-)-methyltransferase TrmFO.